Here is a 172-residue protein sequence, read N- to C-terminus: Ribosomally synthesized cyclic peptide phomopsin precursor phomA (172 aa).

The first 18 residues, 1–18 (MRFTPAIVIAAFCSLAVA), serve as a signal peptide directing secretion. 11 consecutive propeptides follow at residues 19 to 35 (APAA…AVED), 42 to 50 (KKRGEAVED), 57 to 65 (KKRGEAVED), 72 to 79 (KRGEAVED), 86 to 93 (KRGEAVED), 100 to 108 (KKRGEAVED), 115 to 122 (KRGEAVED), 129 to 137 (RKRGEAVED), 144 to 151 (KRGEAVED), 158 to 165 (KRGEAVED), and Lys172.

PhomA is processed by several endopeptidases including kexin proteases as well as the cluster-specific S41 family peptidase phomP1 and the oligopeptidase phomG to produce 10 identical copies of the hexapeptide Tyr-Val-Ile-Pro-Ile-Asp, that is further modified to yield phomapsins. The timing and order of proteolysis of the phomA precursor and PTMs are still unknown. Two tyrosinase-like enzymes, phomQ1 and phomQ2, catalyze the chlorination and hydroxylation of Tyr, respectively. PhomYb, is proposed to be involved in the construction of the macrocyclic structure. The other 4 ustYa family proteins may be involved in PTMs that generate the unique structure of phomopsin A. PhomYa is required for the hydroxylation of C-beta of Tyr. PhomYc, phomYd, and phomYe are responsible for the biosynthesis of 2,3-dehydroisoleucine (dIle), 2,3-dehydroaspartic acid (dAsp), and 3,4-dehydroproline (dPro), respectively. While dIle formation by phomYc is indispensable for the installation of dAsp by phomYd, the order of the other PTMs have not been elucidated yet. Most of the biosynthetic enzymes likely have broad substrate specificity, and thus, there might be a metabolic grid from a precursor to phomopsin A. The enzyme(s) responsible for the biosynthesis of 3,4-dehydrovaline (dVal) have also not been identified yet. Finally, phomM acts as an S-adenosylmethionine-dependent alpha-N-methyltransferase that catalyzes two successive N-methylation reactions, converting N-desmethyl-phomopsin A to phomopsin A and phomopsin A further to an N,N-dimethylated congener called phomopsin E.

It participates in mycotoxin biosynthesis. Its function is as follows. Ribosomally synthesized cyclic peptide phomopsin precursor; part of the gene cluster that mediates the biosynthesis of the phomopsins, a group of hexapeptide mycotoxins which infects lupins and causes lupinosis disease in livestock. The phomA translated product contains a 10-fold repeated peptide embedding the hexapeptide Tyr-Val-Ile-Pro-Ile-Asp, that is converted into phomapsins. After being excised from the precursor peptide by kexin proteases, the core peptides are cyclized and modified post-translationally by enzymes encoded within the corresponding gene cluster. In Diaporthe leptostromiformis (Lupinosis disease fungus), this protein is Ribosomally synthesized cyclic peptide phomopsin precursor phomA.